The following is a 150-amino-acid chain: Large ribosomal subunit protein uL15 (150 aa).

This sequence belongs to the universal ribosomal protein uL15 family. Part of the 50S ribosomal subunit.

Functionally, binds to the 23S rRNA. The chain is Large ribosomal subunit protein uL15 from Rickettsia prowazekii (strain Madrid E).